Reading from the N-terminus, the 701-residue chain is DNA-directed RNA polymerase subunit beta' (701 aa).

4 residues coordinate Zn(2+): Cys76, Cys78, Cys94, and Cys97. 3 residues coordinate Mg(2+): Asp511, Asp513, and Asp515.

It belongs to the RNA polymerase beta' chain family. RpoC1 subfamily. In plastids the minimal PEP RNA polymerase catalytic core is composed of four subunits: alpha, beta, beta', and beta''. When a (nuclear-encoded) sigma factor is associated with the core the holoenzyme is formed, which can initiate transcription. Requires Mg(2+) as cofactor. It depends on Zn(2+) as a cofactor.

The protein resides in the plastid. Its subcellular location is the chloroplast. The catalysed reaction is RNA(n) + a ribonucleoside 5'-triphosphate = RNA(n+1) + diphosphate. DNA-dependent RNA polymerase catalyzes the transcription of DNA into RNA using the four ribonucleoside triphosphates as substrates. The polypeptide is DNA-directed RNA polymerase subunit beta' (Pelargonium hortorum (Common geranium)).